The primary structure comprises 354 residues: Histidinol-phosphate aminotransferase (354 aa).

Residue K222 is modified to N6-(pyridoxal phosphate)lysine.

This sequence belongs to the class-II pyridoxal-phosphate-dependent aminotransferase family. Histidinol-phosphate aminotransferase subfamily. In terms of assembly, homodimer. It depends on pyridoxal 5'-phosphate as a cofactor.

The catalysed reaction is L-histidinol phosphate + 2-oxoglutarate = 3-(imidazol-4-yl)-2-oxopropyl phosphate + L-glutamate. Its pathway is amino-acid biosynthesis; L-histidine biosynthesis; L-histidine from 5-phospho-alpha-D-ribose 1-diphosphate: step 7/9. In Leuconostoc citreum (strain KM20), this protein is Histidinol-phosphate aminotransferase.